Consider the following 185-residue polypeptide: MKLIVALGNPGLKYEKTKHNTGFMALDHYLDEKGLRLDRDKFTALYAKEKVAGEDVIFMEPQTYMNESGRAVGAAAKFFKIDPSDILVIHDDMDMPIAKLRIRAGGKSGGHNGIKSIIACLGTEKFNRLKIGIRHPDKQSVVSWVLTPFNPDQQKELEASFAKVDQIIDDFIAGKDAQYLMNRYN.

Tyr14 lines the tRNA pocket. His19 (proton acceptor) is an active-site residue. 3 residues coordinate tRNA: Tyr64, Asn66, and Asn112.

This sequence belongs to the PTH family. As to quaternary structure, monomer.

Its subcellular location is the cytoplasm. It carries out the reaction an N-acyl-L-alpha-aminoacyl-tRNA + H2O = an N-acyl-L-amino acid + a tRNA + H(+). Its function is as follows. Hydrolyzes ribosome-free peptidyl-tRNAs (with 1 or more amino acids incorporated), which drop off the ribosome during protein synthesis, or as a result of ribosome stalling. Catalyzes the release of premature peptidyl moieties from peptidyl-tRNA molecules trapped in stalled 50S ribosomal subunits, and thus maintains levels of free tRNAs and 50S ribosomes. The sequence is that of Peptidyl-tRNA hydrolase from Lactobacillus delbrueckii subsp. bulgaricus (strain ATCC 11842 / DSM 20081 / BCRC 10696 / JCM 1002 / NBRC 13953 / NCIMB 11778 / NCTC 12712 / WDCM 00102 / Lb 14).